Reading from the N-terminus, the 239-residue chain is 4-hydroxy-tetrahydrodipicolinate reductase (239 aa).

Residues 8–13, 78–80, and 102–105 contribute to the NAD(+) site; these read GSTGKM, GTT, and SANM. His-134 functions as the Proton donor/acceptor in the catalytic mechanism. Residue His-135 coordinates (S)-2,3,4,5-tetrahydrodipicolinate. The active-site Proton donor is the Lys-138. 144–145 is a (S)-2,3,4,5-tetrahydrodipicolinate binding site; the sequence is GT.

This sequence belongs to the DapB family.

It localises to the cytoplasm. The catalysed reaction is (S)-2,3,4,5-tetrahydrodipicolinate + NAD(+) + H2O = (2S,4S)-4-hydroxy-2,3,4,5-tetrahydrodipicolinate + NADH + H(+). It catalyses the reaction (S)-2,3,4,5-tetrahydrodipicolinate + NADP(+) + H2O = (2S,4S)-4-hydroxy-2,3,4,5-tetrahydrodipicolinate + NADPH + H(+). It functions in the pathway amino-acid biosynthesis; L-lysine biosynthesis via DAP pathway; (S)-tetrahydrodipicolinate from L-aspartate: step 4/4. In terms of biological role, catalyzes the conversion of 4-hydroxy-tetrahydrodipicolinate (HTPA) to tetrahydrodipicolinate. In Rickettsia peacockii (strain Rustic), this protein is 4-hydroxy-tetrahydrodipicolinate reductase.